Here is a 266-residue protein sequence, read N- to C-terminus: Hydroxyethylthiazole kinase (266 aa).

A substrate-binding site is contributed by Met-43. 2 residues coordinate ATP: Arg-119 and Thr-166. Gly-193 is a substrate binding site.

This sequence belongs to the Thz kinase family. The cofactor is Mg(2+).

The enzyme catalyses 5-(2-hydroxyethyl)-4-methylthiazole + ATP = 4-methyl-5-(2-phosphooxyethyl)-thiazole + ADP + H(+). The protein operates within cofactor biosynthesis; thiamine diphosphate biosynthesis; 4-methyl-5-(2-phosphoethyl)-thiazole from 5-(2-hydroxyethyl)-4-methylthiazole: step 1/1. Catalyzes the phosphorylation of the hydroxyl group of 4-methyl-5-beta-hydroxyethylthiazole (THZ). This is Hydroxyethylthiazole kinase from Methanococcus maripaludis (strain C7 / ATCC BAA-1331).